A 376-amino-acid chain; its full sequence is MYVFGIFAVMIAVGALIGAVTNHFAIKMLFRPYKAIYIFGKRVPFTPGLIPKRRDELARQMGQMVTGHLLTTEGLKKRLASDAVKSQAVQVGERLLARLSQSTATVEEALESIGISNPAQKADRAVSRLADEKLTAFLEAYENEPLKKLFPLEAQEKLKEKIPMVSSYILSRAVSYFESDEGKERLGHMIDDFLKERGMLGSMVQMFLGNSSLVDRVQPEIVKFLKNGETAGLLQDLLENEWDKLKEYTFKEADDKWNLKPLIFDLKEKLLKRFSLQPFFEKTIGSSISSFEQDIALRLPQMADRLLEEAGRRLDQALKQLELEQIVKEQVDNFPVERLEEMVLSISKREFKMITYLGGLLGGIIGAVQAIFVILI.

Helical transmembrane passes span 1-21 (MYVF…GAVT) and 356-376 (YLGG…VILI).

Belongs to the UPF0754 family.

It is found in the cell membrane. The protein is UPF0754 membrane protein BLi01057/BL02871 of Bacillus licheniformis (strain ATCC 14580 / DSM 13 / JCM 2505 / CCUG 7422 / NBRC 12200 / NCIMB 9375 / NCTC 10341 / NRRL NRS-1264 / Gibson 46).